Here is a 772-residue protein sequence, read N- to C-terminus: TBC domain-containing protein C4G8.04 (772 aa).

The segment covering serine 143–threonine 161 has biased composition (polar residues). 2 disordered regions span residues serine 143–glutamate 163 and lysine 275–serine 294. The span at lysine 275–threonine 291 shows a compositional bias: low complexity. Threonine 395 bears the Phosphothreonine mark. The 190-residue stretch at glycine 504 to glycine 693 folds into the Rab-GAP TBC domain.

This chain is TBC domain-containing protein C4G8.04, found in Schizosaccharomyces pombe (strain 972 / ATCC 24843) (Fission yeast).